The sequence spans 516 residues: Delta(24)-sterol reductase (516 aa).

The first 22 residues, 1–22 (MEPAVSLAVCALLFLLWVRVKG), serve as a signal peptide directing secretion. The Lumenal portion of the chain corresponds to 23 to 31 (LEFVLIHQR). The chain crosses the membrane as a helical span at residues 32–52 (WVFVCLFLLPLSLIFDIYYYV). Residues 53–516 (RAWVVFKLSS…YDKICKAARH (464 aa)) lie on the Cytoplasmic side of the membrane. The FAD-binding PCMH-type domain maps to 58–234 (FKLSSAPRLH…VAAEIRIIPA (177 aa)). 163-175 (TVGGLIMGTGIES) provides a ligand contact to FAD.

Belongs to the FAD-binding oxidoreductase/transferase type 4 family. Interacts with DHCR7; this interaction regulates DHCR7 activity. FAD serves as cofactor.

Its subcellular location is the endoplasmic reticulum membrane. It localises to the golgi apparatus membrane. The catalysed reaction is cholesterol + NADP(+) = desmosterol + NADPH + H(+). It carries out the reaction lanosterol + NADPH + H(+) = 24,25-dihydrolanosterol + NADP(+). It catalyses the reaction 5alpha-cholest-8-en-3beta-ol + NADP(+) = zymosterol + NADPH + H(+). It functions in the pathway steroid biosynthesis; cholesterol biosynthesis. Its function is as follows. Catalyzes the reduction of the delta-24 double bond of sterol intermediates during cholesterol biosynthesis. In addition to its cholesterol-synthesizing activity, can protect cells from oxidative stress by reducing caspase 3 activity during apoptosis induced by oxidative stress. Also protects against amyloid-beta peptide-induced apoptosis. The chain is Delta(24)-sterol reductase (Dhcr24) from Rattus norvegicus (Rat).